The sequence spans 345 residues: DNA N(6)-methyladenine demethylase ALKBH1A (345 aa).

Substrate-binding positions include Trp179 and 186–188 (FDW). A Fe2OG dioxygenase domain is found at 225-345 (RPEGAIVNYF…RININIRQVF (121 aa)). 232–234 (NYF) provides a ligand contact to 2-oxoglutarate. Residues His243, Asp245, and His299 each contribute to the Fe cation site. 336-342 (RININIR) provides a ligand contact to 2-oxoglutarate.

The protein belongs to the alkB family. Fe(2+) is required as a cofactor. As to expression, mostly expressed in siliques, to a lower extent in roots, seedlings and rosette leaves, but barely in cauline leaves, stems and flowers.

It localises to the nucleus. The protein resides in the cytoplasm. It catalyses the reaction an N(6)-methyl-2'-deoxyadenosine in DNA + 2-oxoglutarate + O2 = a 2'-deoxyadenosine in DNA + formaldehyde + succinate + CO2. Its function is as follows. Dioxygenase that catalyzes DNA N(6)-methyladenine (6 mA) demethylation to modulate gene expression and regulate seed germination. This is DNA N(6)-methyladenine demethylase ALKBH1A from Arabidopsis thaliana (Mouse-ear cress).